Consider the following 153-residue polypeptide: Superoxide dismutase [Cu-Zn] (153 aa).

Cu cation is bound by residues His-45, His-47, and His-62. An intrachain disulfide couples Cys-56 to Cys-145. Residues His-62, His-70, His-79, and Asp-82 each contribute to the Zn(2+) site. Cu cation is bound at residue His-119.

This sequence belongs to the Cu-Zn superoxide dismutase family. Homodimer. Cu cation serves as cofactor. The cofactor is Zn(2+).

Its subcellular location is the cytoplasm. It carries out the reaction 2 superoxide + 2 H(+) = H2O2 + O2. Its function is as follows. Destroys radicals which are normally produced within the cells and which are toxic to biological systems. The protein is Superoxide dismutase [Cu-Zn] of Ceratitis capitata (Mediterranean fruit fly).